Here is a 255-residue protein sequence, read N- to C-terminus: Hydroxyacylglutathione hydrolase (255 aa).

Residues H53, H55, D57, H58, H110, D127, and H165 each contribute to the Zn(2+) site.

This sequence belongs to the metallo-beta-lactamase superfamily. Glyoxalase II family. Monomer. Requires Zn(2+) as cofactor.

It carries out the reaction an S-(2-hydroxyacyl)glutathione + H2O = a 2-hydroxy carboxylate + glutathione + H(+). It functions in the pathway secondary metabolite metabolism; methylglyoxal degradation; (R)-lactate from methylglyoxal: step 2/2. Functionally, thiolesterase that catalyzes the hydrolysis of S-D-lactoyl-glutathione to form glutathione and D-lactic acid. The polypeptide is Hydroxyacylglutathione hydrolase (Xanthomonas euvesicatoria pv. vesicatoria (strain 85-10) (Xanthomonas campestris pv. vesicatoria)).